A 166-amino-acid polypeptide reads, in one-letter code: Disulfide bond formation protein B (166 aa).

Residues 1 to 11 (MIALPRNRRPL) lie on the Cytoplasmic side of the membrane. Residues 12–28 (FLAVFAYCAALLAFGLY) traverse the membrane as a helical segment. Residues 29 to 46 (LQHYQGIEPCPMCIMQRY) are Periplasmic-facing. A disulfide bridge connects residues C38 and C41. The helical transmembrane segment at 47-63 (AFALVGVIALVAGLHGP) threads the bilayer. The Cytoplasmic portion of the chain corresponds to 64–70 (RGAGVRV). A helical membrane pass occupies residues 71-87 (YGGLLLLTALAGGSVAA). Residues 88–143 (RQTWMQLYPPEIPECGPGLEYMLESFPLTSALPMIFRGAGDCSAIDWTFLGLSLAN) lie on the Periplasmic side of the membrane. C102 and C129 are oxidised to a cystine. The helical transmembrane segment at 144-162 (WSLLNFGAAALLALWLLFG) threads the bilayer. At 163–166 (RRVR) the chain is on the cytoplasmic side.

It belongs to the DsbB family.

It is found in the cell inner membrane. Required for disulfide bond formation in some periplasmic proteins. Acts by oxidizing the DsbA protein. This is Disulfide bond formation protein B from Azoarcus sp. (strain BH72).